The chain runs to 316 residues: Probable cell division protein WhiA (316 aa).

The segment at residues 276–309 is a DNA-binding region (H-T-H motif); it reads SLEELGKIAEPQITKDAIAGRIRRLLQLAEKTEK.

Belongs to the WhiA family.

Functionally, involved in cell division and chromosome segregation. This Bifidobacterium longum (strain NCC 2705) protein is Probable cell division protein WhiA.